We begin with the raw amino-acid sequence, 166 residues long: tRNA-acetylating toxin (166 aa).

The disordered stretch occupies residues 1 to 22; the sequence is MSGYSAPRRISDADDVTSFSSG. Residues 1 to 162 form the N-acetyltransferase domain; the sequence is MSGYSAPRRI…LMLLMKDARA (162 aa). The active site involves Y138.

Belongs to the acetyltransferase family. GNAT subfamily. Homodimer, forms a complex with cognate antitoxin TacA.

The enzyme catalyses glycyl-tRNA(Gly) + acetyl-CoA = N-acetylglycyl-tRNA(Gly) + CoA + H(+). Toxic component of a type II toxin-antitoxin (TA) system. Overexpression of this gene alone in M.smegmatis inhibits growth, while overexpression of the tacA-tacT operon does not. Acetylates glycyl-tRNA(Gly) but not other tRNAs, blocks in vitro translation in the presence, but not absence, of acetyl-coenzyme A. Peptidyl-tRNA hydrolase (pth) counteracts the product of this enzyme in vitro. Neutralized by cognate antitoxin TacA. Does not seem to be active in laboratory growth conditions. Functionally, tacA-TacT both represses and derepresses expression of its own operon. This is tRNA-acetylating toxin from Mycobacterium tuberculosis (strain ATCC 25618 / H37Rv).